Consider the following 263-residue polypeptide: HTH-type transcriptional repressor NanR (263 aa).

The segment at 1–25 (MDVMNAFDSQAEDSPTSLGRSLRRR) is disordered. Positions 30-98 (KKLSEMVEEE…NGERARVSRP (69 aa)) constitute an HTH gntR-type domain. A DNA-binding region (H-T-H motif) is located at residues 58–77 (ERELMAFFNVGRPSVREALA).

Belongs to the NanR family.

Transcriptional repressor that controls expression of the genes required for the catabolism of sialic acids. This is HTH-type transcriptional repressor NanR from Salmonella schwarzengrund (strain CVM19633).